Reading from the N-terminus, the 377-residue chain is Nitric oxide reductase FlRd-NAD(+) reductase (377 aa).

The protein belongs to the FAD-dependent oxidoreductase family. The cofactor is FAD.

It localises to the cytoplasm. The catalysed reaction is 2 reduced [nitric oxide reductase rubredoxin domain] + NAD(+) + H(+) = 2 oxidized [nitric oxide reductase rubredoxin domain] + NADH. It participates in nitrogen metabolism; nitric oxide reduction. One of at least two accessory proteins for anaerobic nitric oxide (NO) reductase. Reduces the rubredoxin moiety of NO reductase. This Salmonella gallinarum (strain 287/91 / NCTC 13346) protein is Nitric oxide reductase FlRd-NAD(+) reductase.